The chain runs to 231 residues: Small ribosomal subunit protein uS3 (231 aa).

The KH type-2 domain occupies Ile39–Lys107.

It belongs to the universal ribosomal protein uS3 family. In terms of assembly, part of the 30S ribosomal subunit. Forms a tight complex with proteins S10 and S14.

Binds the lower part of the 30S subunit head. Binds mRNA in the 70S ribosome, positioning it for translation. The chain is Small ribosomal subunit protein uS3 from Pelotomaculum thermopropionicum (strain DSM 13744 / JCM 10971 / SI).